A 671-amino-acid chain; its full sequence is MSKSFKLHSVFKPAGDQPEAIRKLEEGLENGLAHQTLLGVTGSGKTFTVANVIADLNRPTMILAPNKTLAAQLYGEMKEFFPDNAVEYFVSYYDYYQPEAYVPSSDTFIEKDASVNEHIEQMRLSATKALLERRDVVVVASVSAIYGLGVPDLYLKMMLHLTRGMIIDQRSILRRLSELQYSRNDQVFQRGTFRVRGEVIDIFPAESDEWALRVELFDEEVERLSIFDPLTGQLQHEVPRFTVYPKTHYVTPRERILQAMEEIKVELAERRQVLLANNKLLEEQRLSQRTQFDLEMMNELGYCSGIENYSRYLSGRGPGEAPPTLFDYLPADGLLIVDESHVTIPQIGGMYKGDRSRKETLVEYGFRLPSALDNRPMRFEEFEALAPQTIYVSATPGKYELEKSGGDIIEQVVRPTGLLDPLIEVRPVATQVDDLLSEIRIRAAINERVLVTTLTKRMAEDLTDYLSEHGAKVRYLHSDIDTVERVEIIRDLRLGEFDVLVGINLLREGLDMPEVSLVAILDADKEGFLRSERSLIQTIGRAARNLNGKAILYGDRITASMEKAIGETERRRAKQQAYNEERRIIPQGLNKKIGDILQLGQPSMRGKGKGRGSHKMADTTQYQSLSPKALDQKIRELEAKMYTYAQNLEFEQAAELRDQVHQLRQQFIAIS.

The region spanning 26-183 (EGLENGLAHQ…RRLSELQYSR (158 aa)) is the Helicase ATP-binding domain. Residue 39-46 (GVTGSGKT) participates in ATP binding. Positions 92 to 115 (YYDYYQPEAYVPSSDTFIEKDASV) match the Beta-hairpin motif. One can recognise a Helicase C-terminal domain in the interval 431–593 (QVDDLLSEIR…IIPQGLNKKI (163 aa)). In terms of domain architecture, UVR spans 631–666 (DQKIRELEAKMYTYAQNLEFEQAAELRDQVHQLRQQ).

This sequence belongs to the UvrB family. In terms of assembly, forms a heterotetramer with UvrA during the search for lesions. Interacts with UvrC in an incision complex.

It is found in the cytoplasm. The UvrABC repair system catalyzes the recognition and processing of DNA lesions. A damage recognition complex composed of 2 UvrA and 2 UvrB subunits scans DNA for abnormalities. Upon binding of the UvrA(2)B(2) complex to a putative damaged site, the DNA wraps around one UvrB monomer. DNA wrap is dependent on ATP binding by UvrB and probably causes local melting of the DNA helix, facilitating insertion of UvrB beta-hairpin between the DNA strands. Then UvrB probes one DNA strand for the presence of a lesion. If a lesion is found the UvrA subunits dissociate and the UvrB-DNA preincision complex is formed. This complex is subsequently bound by UvrC and the second UvrB is released. If no lesion is found, the DNA wraps around the other UvrB subunit that will check the other stand for damage. In Yersinia pestis bv. Antiqua (strain Antiqua), this protein is UvrABC system protein B.